A 220-amino-acid polypeptide reads, in one-letter code: NADH-quinone oxidoreductase subunit I (220 aa).

4Fe-4S ferredoxin-type domains lie at 71–102 (LQRL…IITH) and 112–141 (DSYT…MGNR). 8 residues coordinate [4Fe-4S] cluster: cysteine 82, cysteine 85, cysteine 88, cysteine 92, cysteine 121, cysteine 124, cysteine 127, and cysteine 131. The interval 189–220 (ATPLDYVQEPSKEESKKETPTSPEANKGDENV) is disordered. Basic and acidic residues predominate over residues 198–207 (PSKEESKKET).

The protein belongs to the complex I 23 kDa subunit family. As to quaternary structure, NDH-1 is composed of 14 different subunits. Subunits NuoA, H, J, K, L, M, N constitute the membrane sector of the complex. Requires [4Fe-4S] cluster as cofactor.

It is found in the cell inner membrane. The catalysed reaction is a quinone + NADH + 5 H(+)(in) = a quinol + NAD(+) + 4 H(+)(out). Functionally, NDH-1 shuttles electrons from NADH, via FMN and iron-sulfur (Fe-S) centers, to quinones in the respiratory chain. The immediate electron acceptor for the enzyme in this species is believed to be ubiquinone. Couples the redox reaction to proton translocation (for every two electrons transferred, four hydrogen ions are translocated across the cytoplasmic membrane), and thus conserves the redox energy in a proton gradient. This is NADH-quinone oxidoreductase subunit I from Helicobacter acinonychis (strain Sheeba).